The primary structure comprises 250 residues: UDP-2,3-diacylglucosamine hydrolase (250 aa).

Residues D8, H10, D41, N79, and H115 each coordinate Mn(2+). 79-80 is a binding site for substrate; the sequence is NH. 4 residues coordinate substrate: D123, T165, K168, and H196. Mn(2+) contacts are provided by H196 and H198.

Belongs to the LpxH family. Mn(2+) is required as a cofactor.

The protein localises to the cell inner membrane. It carries out the reaction UDP-2-N,3-O-bis[(3R)-3-hydroxytetradecanoyl]-alpha-D-glucosamine + H2O = 2-N,3-O-bis[(3R)-3-hydroxytetradecanoyl]-alpha-D-glucosaminyl 1-phosphate + UMP + 2 H(+). It participates in glycolipid biosynthesis; lipid IV(A) biosynthesis; lipid IV(A) from (3R)-3-hydroxytetradecanoyl-[acyl-carrier-protein] and UDP-N-acetyl-alpha-D-glucosamine: step 4/6. Its function is as follows. Hydrolyzes the pyrophosphate bond of UDP-2,3-diacylglucosamine to yield 2,3-diacylglucosamine 1-phosphate (lipid X) and UMP by catalyzing the attack of water at the alpha-P atom. Involved in the biosynthesis of lipid A, a phosphorylated glycolipid that anchors the lipopolysaccharide to the outer membrane of the cell. In Blochmanniella pennsylvanica (strain BPEN), this protein is UDP-2,3-diacylglucosamine hydrolase.